The sequence spans 653 residues: Alpha-L-iduronidase (653 aa).

An N-terminal signal peptide occupies residues 1–27 (MRPLRPRAALLALLASLLAAPPVAPAE). Alpha-D-mannopyranose is bound by residues P54, L56, and H58. H91 is an alpha-L-iduronate binding site. A glycan (N-linked (GlcNAc...) asparagine) is linked at N110. The alpha-L-iduronate site is built by N181 and E182. Residue E182 is the Proton donor of the active site. Residue N190 is glycosylated (N-linked (GlcNAc...) asparagine). 3 residues coordinate alpha-L-iduronate: K264, E299, and G305. E299 functions as the Nucleophile in the catalytic mechanism. Residue W306 participates in alpha-D-mannopyranose binding. An N-linked (GlcNAc...) asparagine glycan is attached at N336. Alpha-L-iduronate contacts are provided by D349 and R363. N372, N415, and N451 each carry an N-linked (GlcNAc...) asparagine glycan. Alpha-D-mannopyranose-binding residues include R488 and R492. R492 provides a ligand contact to beta-D-mannose. C541 and C577 form a disulfide bridge.

This sequence belongs to the glycosyl hydrolase 39 family. As to quaternary structure, monomer. Post-translationally, N-glycosylation at Asn-372 contributes to substrate binding and is required for full enzymatic activity. In terms of tissue distribution, ubiquitous.

The protein resides in the lysosome. It catalyses the reaction Hydrolysis of unsulfated alpha-L-iduronosidic linkages in dermatan sulfate.. The protein is Alpha-L-iduronidase (IDUA) of Homo sapiens (Human).